Reading from the N-terminus, the 508-residue chain is Glycerol kinase (508 aa).

Residue Thr-14 participates in ADP binding. Residues Thr-14, Thr-15, and Ser-16 each coordinate ATP. Residue Thr-14 coordinates sn-glycerol 3-phosphate. ADP is bound at residue Arg-18. Sn-glycerol 3-phosphate contacts are provided by Arg-84, Glu-85, and Tyr-136. 3 residues coordinate glycerol: Arg-84, Glu-85, and Tyr-136. His-232 carries the phosphohistidine; by HPr modification. Sn-glycerol 3-phosphate is bound at residue Asp-246. Asp-246 and Gln-247 together coordinate glycerol. ADP-binding residues include Thr-268 and Gly-311. ATP-binding residues include Thr-268, Gly-311, Gln-315, and Gly-412. ADP is bound by residues Gly-412 and Asn-416.

This sequence belongs to the FGGY kinase family. Homotetramer and homodimer (in equilibrium). Post-translationally, the phosphoenolpyruvate-dependent sugar phosphotransferase system (PTS), including enzyme I, and histidine-containing protein (HPr) are required for the phosphorylation, which leads to the activation of the enzyme.

It carries out the reaction glycerol + ATP = sn-glycerol 3-phosphate + ADP + H(+). Its pathway is polyol metabolism; glycerol degradation via glycerol kinase pathway; sn-glycerol 3-phosphate from glycerol: step 1/1. Its activity is regulated as follows. Activated by phosphorylation and inhibited by fructose 1,6-bisphosphate (FBP). Its function is as follows. Key enzyme in the regulation of glycerol uptake and metabolism. Catalyzes the phosphorylation of glycerol to yield sn-glycerol 3-phosphate. The chain is Glycerol kinase from Streptococcus pyogenes serotype M18 (strain MGAS8232).